We begin with the raw amino-acid sequence, 299 residues long: Apolipoprotein E (299 aa).

Positions 1–18 (MKALWAVLVVTLLAGCRA) are cleaved as a signal peptide. 8 repeat units span residues 74 to 95 (VLMEDTMKEVKAYKNELEEELG), 96 to 117 (PVAEDTKARLSKELQGAQARLR), 118 to 139 (ADMEEVRNRLAHYSEEMQVMLG), 140 to 161 (QSPDELRARLGSHLRKLRKRLL), 162 to 183 (RDAEDLQKRLAVYKAGAREGAE), 184 to 205 (RGVSAIRERLGSLVEQSRVRAA), 206 to 223 (LTGQPLRERAQAWGERLR), and 224 to 245 (GRLEEVGGRARDRLDEVREQME). The segment at 74-245 (VLMEDTMKEV…RLDEVREQME (172 aa)) is 8 X 22 AA approximate tandem repeats. Residues 152 to 162 (HLRKLRKRLLR) are LDL and other lipoprotein receptors binding. Position 156–159 (156–159 (LRKR)) interacts with heparin. The segment at 204–273 (AALTGQPLRE…GWFEPMMEDM (70 aa)) is lipid-binding and lipoprotein association. Heparin is bound at residue 219–226 (GERLRGRL). The interval 261–273 (RLKGWFEPMMEDM) is specificity for association with VLDL.

It belongs to the apolipoprotein A1/A4/E family. Homotetramer. May interact with ABCA1; functionally associated with ABCA1 in the biogenesis of HDLs. May interact with APP/A4 amyloid-beta peptide; the interaction is extremely stable in vitro but its physiological significance is unclear. May interact with MAPT. May interact with MAP2. In the cerebrospinal fluid, interacts with secreted SORL1. Interacts with PMEL; this allows the loading of PMEL luminal fragment on ILVs to induce fibril nucleation. Post-translationally, APOE exists as multiple glycosylated and sialylated glycoforms within cells and in plasma. The extent of glycosylation and sialylation are tissue and context specific. In terms of processing, glycated in plasma VLDL. Phosphorylated by FAM20C in the extracellular medium.

It is found in the secreted. It localises to the extracellular space. The protein resides in the extracellular matrix. The protein localises to the extracellular vesicle. Its subcellular location is the endosome. It is found in the multivesicular body. APOE is an apolipoprotein, a protein associating with lipid particles, that mainly functions in lipoprotein-mediated lipid transport between organs via the plasma and interstitial fluids. APOE is a core component of plasma lipoproteins and is involved in their production, conversion and clearance. Apolipoproteins are amphipathic molecules that interact both with lipids of the lipoprotein particle core and the aqueous environment of the plasma. As such, APOE associates with chylomicrons, chylomicron remnants, very low density lipoproteins (VLDL) and intermediate density lipoproteins (IDL) but shows a preferential binding to high-density lipoproteins (HDL). It also binds a wide range of cellular receptors including the LDL receptor/LDLR and the very low-density lipoprotein receptor/VLDLR that mediate the cellular uptake of the APOE-containing lipoprotein particles. Finally, APOE also has a heparin-binding activity and binds heparan-sulfate proteoglycans on the surface of cells, a property that supports the capture and the receptor-mediated uptake of APOE-containing lipoproteins by cells. In Heterocephalus glaber (Naked mole rat), this protein is Apolipoprotein E (APOE).